The following is a 496-amino-acid chain: tRNA modification GTPase mss1, mitochondrial (496 aa).

The N-terminal 19 residues, 1-19 (MRILNRVFLNTFQACFRRF), are a transit peptide targeting the mitochondrion. Residues 239 to 416 (GINVAILGPS…FLQALSSTFE (178 aa)) enclose the TrmE-type G domain. GTP contacts are provided by residues 246 to 253 (GPSNAGKS), 293 to 297 (DTAGL), and 363 to 366 (NKVD).

This sequence belongs to the TRAFAC class TrmE-Era-EngA-EngB-Septin-like GTPase superfamily. TrmE GTPase family.

It is found in the mitochondrion. In terms of biological role, GTPase involved in the 5-carboxymethylaminomethyl modification (mnm(5)s(2)U34) of the wobble uridine base in mitochondrial tRNAs. This Schizosaccharomyces pombe (strain 972 / ATCC 24843) (Fission yeast) protein is tRNA modification GTPase mss1, mitochondrial (mss1).